The primary structure comprises 387 residues: Chaperone protein DnaJ (387 aa).

One can recognise a J domain in the interval 5 to 70; that stretch reads DYYEILEVSA…QKRQAYDQFG (66 aa). A CR-type zinc finger spans residues 130–208; that stretch reads GTTVDVRIPT…CRGEGYKHSS (79 aa). Residues Cys-143, Cys-146, Cys-160, Cys-163, Cys-182, Cys-185, Cys-196, and Cys-199 each contribute to the Zn(2+) site. 4 CXXCXGXG motif repeats span residues 143–150, 160–167, 182–189, and 196–203; these read CESCDGSG, CPTCQGIG, CPNCHGTG, and CKTCRGEG.

The protein belongs to the DnaJ family. As to quaternary structure, homodimer. Zn(2+) is required as a cofactor.

Its subcellular location is the cytoplasm. Functionally, participates actively in the response to hyperosmotic and heat shock by preventing the aggregation of stress-denatured proteins and by disaggregating proteins, also in an autonomous, DnaK-independent fashion. Unfolded proteins bind initially to DnaJ; upon interaction with the DnaJ-bound protein, DnaK hydrolyzes its bound ATP, resulting in the formation of a stable complex. GrpE releases ADP from DnaK; ATP binding to DnaK triggers the release of the substrate protein, thus completing the reaction cycle. Several rounds of ATP-dependent interactions between DnaJ, DnaK and GrpE are required for fully efficient folding. Also involved, together with DnaK and GrpE, in the DNA replication of plasmids through activation of initiation proteins. The protein is Chaperone protein DnaJ of Hydrogenovibrio crunogenus (strain DSM 25203 / XCL-2) (Thiomicrospira crunogena).